We begin with the raw amino-acid sequence, 407 residues long: Peptidase T (407 aa).

Residue His-82 coordinates Zn(2+). Asp-84 is a catalytic residue. Asp-143 lines the Zn(2+) pocket. The active-site Proton acceptor is the Glu-177. Positions 178, 200, and 382 each coordinate Zn(2+).

This sequence belongs to the peptidase M20B family. The cofactor is Zn(2+).

It localises to the cytoplasm. It catalyses the reaction Release of the N-terminal residue from a tripeptide.. Its function is as follows. Cleaves the N-terminal amino acid of tripeptides. This is Peptidase T from Streptococcus equi subsp. equi (strain 4047).